A 457-amino-acid polypeptide reads, in one-letter code: Bifunctional protein GlmU (457 aa).

A pyrophosphorylase region spans residues 1–227 (MTQLSVVILA…FMEVEGANNR (227 aa)). UDP-N-acetyl-alpha-D-glucosamine contacts are provided by residues 9–12 (LAAG), Lys23, Gln74, 79–80 (GT), 101–103 (YGD), Gly138, Glu152, Asn167, and Asn225. Mg(2+) is bound at residue Asp103. Asn225 contacts Mg(2+). Positions 228-248 (LQLAALERFYQKTQAEKLLLA) are linker. The segment at 249-457 (GVRLIDPARF…QRPTKKKIAD (209 aa)) is N-acetyltransferase. The UDP-N-acetyl-alpha-D-glucosamine site is built by Arg331 and Lys349. Residue His361 is the Proton acceptor of the active site. 2 residues coordinate UDP-N-acetyl-alpha-D-glucosamine: Tyr364 and Asn375. Acetyl-CoA is bound by residues Ala378, 384 to 385 (NY), Ser403, Ala421, and Arg438.

This sequence in the N-terminal section; belongs to the N-acetylglucosamine-1-phosphate uridyltransferase family. In the C-terminal section; belongs to the transferase hexapeptide repeat family. Homotrimer. Mg(2+) is required as a cofactor.

The protein localises to the cytoplasm. It carries out the reaction alpha-D-glucosamine 1-phosphate + acetyl-CoA = N-acetyl-alpha-D-glucosamine 1-phosphate + CoA + H(+). The catalysed reaction is N-acetyl-alpha-D-glucosamine 1-phosphate + UTP + H(+) = UDP-N-acetyl-alpha-D-glucosamine + diphosphate. The protein operates within nucleotide-sugar biosynthesis; UDP-N-acetyl-alpha-D-glucosamine biosynthesis; N-acetyl-alpha-D-glucosamine 1-phosphate from alpha-D-glucosamine 6-phosphate (route II): step 2/2. It functions in the pathway nucleotide-sugar biosynthesis; UDP-N-acetyl-alpha-D-glucosamine biosynthesis; UDP-N-acetyl-alpha-D-glucosamine from N-acetyl-alpha-D-glucosamine 1-phosphate: step 1/1. It participates in bacterial outer membrane biogenesis; LPS lipid A biosynthesis. Catalyzes the last two sequential reactions in the de novo biosynthetic pathway for UDP-N-acetylglucosamine (UDP-GlcNAc). The C-terminal domain catalyzes the transfer of acetyl group from acetyl coenzyme A to glucosamine-1-phosphate (GlcN-1-P) to produce N-acetylglucosamine-1-phosphate (GlcNAc-1-P), which is converted into UDP-GlcNAc by the transfer of uridine 5-monophosphate (from uridine 5-triphosphate), a reaction catalyzed by the N-terminal domain. This Actinobacillus pleuropneumoniae serotype 5b (strain L20) protein is Bifunctional protein GlmU.